The primary structure comprises 273 residues: Protein B4 (273 aa).

The segment at 1 to 24 (MAPKKAVAAPEGGNKENAAVKGSS) is disordered. Residues 40–118 (SHPPTLSMVV…GATGRFKLAK (79 aa)) enclose the H15 domain. Residues 120–273 (VKTTKAGKEN…AGKKGKKVTN (154 aa)) form a disordered region. Positions 154–256 (AKTEKEPKGE…KDVKAQKDST (103 aa)) are enriched in basic and acidic residues. Repeat copies occupy residues 189-198 (KEAKEVDKAN), 199-208 (KEAKEVDKAN), and 209-217 (KEAKEVDKA). A 3 X 10 AA tandem repeats region spans residues 189–217 (KEAKEVDKANKEAKEVDKANKEAKEVDKA). Over residues 264–273 (AGKKGKKVTN) the composition is skewed to basic residues.

This sequence belongs to the histone H1/H5 family. As to quaternary structure, interacts with nap1l1.

It localises to the nucleus. It is found in the chromosome. This chain is Protein B4 (b4), found in Xenopus laevis (African clawed frog).